We begin with the raw amino-acid sequence, 374 residues long: Histidine biosynthesis bifunctional protein HisB (374 aa).

A histidinol-phosphatase region spans residues 1–183 (MKKKVLFIDR…RVAEFLFAGE (183 aa)). Aspartate 9 (nucleophile) is an active-site residue. Residues aspartate 9, aspartate 11, and aspartate 131 each coordinate Mg(2+). Residue aspartate 11 is the Proton donor of the active site. The tract at residues 184-374 (RRAEIRRTTK…FELPSSKGVL (191 aa)) is imidazoleglycerol-phosphate dehydratase.

In the N-terminal section; belongs to the histidinol-phosphatase family. This sequence in the C-terminal section; belongs to the imidazoleglycerol-phosphate dehydratase family. Mg(2+) serves as cofactor.

It is found in the cytoplasm. The catalysed reaction is D-erythro-1-(imidazol-4-yl)glycerol 3-phosphate = 3-(imidazol-4-yl)-2-oxopropyl phosphate + H2O. The enzyme catalyses L-histidinol phosphate + H2O = L-histidinol + phosphate. It functions in the pathway amino-acid biosynthesis; L-histidine biosynthesis; L-histidine from 5-phospho-alpha-D-ribose 1-diphosphate: step 6/9. Its pathway is amino-acid biosynthesis; L-histidine biosynthesis; L-histidine from 5-phospho-alpha-D-ribose 1-diphosphate: step 8/9. This Bacteroides fragilis (strain ATCC 25285 / DSM 2151 / CCUG 4856 / JCM 11019 / LMG 10263 / NCTC 9343 / Onslow / VPI 2553 / EN-2) protein is Histidine biosynthesis bifunctional protein HisB.